A 254-amino-acid polypeptide reads, in one-letter code: Phosphate import ATP-binding protein PstB 2 (254 aa).

Residues phenylalanine 9 to valine 249 enclose the ABC transporter domain. Position 41–48 (glycine 41–serine 48) interacts with ATP.

It belongs to the ABC transporter superfamily. Phosphate importer (TC 3.A.1.7) family. The complex is composed of two ATP-binding proteins (PstB), two transmembrane proteins (PstC and PstA) and a solute-binding protein (PstS).

It is found in the cell inner membrane. The enzyme catalyses phosphate(out) + ATP + H2O = ADP + 2 phosphate(in) + H(+). Part of the ABC transporter complex PstSACB involved in phosphate import. Responsible for energy coupling to the transport system. This Photobacterium profundum (strain SS9) protein is Phosphate import ATP-binding protein PstB 2.